We begin with the raw amino-acid sequence, 296 residues long: Trimeric intracellular cation channel type A (296 aa).

Residues 1-19 (MELPGALQLGELAAAFASV) lie on the Lumenal side of the membrane. The chain crosses the membrane as a helical span at residues 20-37 (PVFPLFDAAYFIVSVLYL). The Cytoplasmic portion of the chain corresponds to 38 to 51 (KYEPGAVEMSRKSP). Residues 52–73 (FASWLCAMLHCFGSYILADLLL) traverse the membrane as a helical segment. Glycine 74 contacts Ca(2+). The Lumenal segment spans residues 74–85 (GESPIHYFSNNS). The chain crosses the membrane as a helical span at residues 86-103 (SVILATAVWYLIFFCPMN). Over 104-107 (LFYK) the chain is Cytoplasmic. A helical membrane pass occupies residues 108–126 (CVSFLPVKLIFVAMKEVVR). A 1,2-diacyl-sn-glycero-3-phospho-(1D-myo-inositol-4,5-bisphosphate) is bound by residues lysine 122 and arginine 126. Residues 127 to 144 (VRKIAAGVHHAHHQYHHG) lie on the Lumenal side of the membrane. A helical membrane pass occupies residues 145–162 (WFIMMATGWVKGSGVALM). At 163 to 183 (SNFEQLLRGVWRPETNEILHM) the chain is on the cytoplasmic side. The chain crosses the membrane as a helical span at residues 184–201 (SFPTKASLYGTVLFTLQQ). Topologically, residues 202–209 (THWLPVSE) are lumenal. A helical membrane pass occupies residues 210-230 (ANLVFFFTMFMIVCKVFMTAT). The Cytoplasmic segment spans residues 231–273 (HSHASPFAPVEGFICPVFFGSVSSGHTSHHNQHGHSHEASYQP). Positions 256–296 (HTSHHNQHGHSHEASYQPPPPVKSKEELNEGTRKRKAKKAE) are disordered. Residues 278–287 (KSKEELNEGT) are compositionally biased toward basic and acidic residues.

The protein belongs to the TMEM38 family. In terms of assembly, homotrimer; conformation seems to be controled by binding to diacylglycerol (DAG).

It localises to the sarcoplasmic reticulum membrane. It is found in the nucleus membrane. The catalysed reaction is K(+)(in) = K(+)(out). Channel activity is activated by a change of voltage within the sarcoplasmic reticulum lumen and blocked by luminal high Ca(2+) levels. Its function is as follows. Intracellular monovalent cation channel required for maintenance of rapid intracellular calcium release. Acts as a potassium counter-ion channel that functions in synchronization with calcium release from intracellular stores. Opened by a change of voltage within the sarcoplasmic reticulum lumen. The sequence is that of Trimeric intracellular cation channel type A (TMEM38A) from Gallus gallus (Chicken).